We begin with the raw amino-acid sequence, 139 residues long: Arsenate reductase (139 aa).

Active-site nucleophile residues include cysteine 10, cysteine 82, and cysteine 89. Disulfide bonds link cysteine 10/cysteine 82 and cysteine 82/cysteine 89.

This sequence belongs to the low molecular weight phosphotyrosine protein phosphatase family. Thioredoxin-coupled ArsC subfamily.

The protein resides in the cytoplasm. The enzyme catalyses arsenate + [thioredoxin]-dithiol + H(+) = arsenite + [thioredoxin]-disulfide + H2O. In terms of biological role, catalyzes the reduction of arsenate [As(V)] to arsenite [As(III)]. This is Arsenate reductase from Oceanobacillus iheyensis (strain DSM 14371 / CIP 107618 / JCM 11309 / KCTC 3954 / HTE831).